The primary structure comprises 610 residues: Ubiquilin-like protein (610 aa).

Positions 31-105 (IRVIVKTPGN…IHVVIKSKHG (75 aa)) constitute a Ubiquitin-like domain. The 46-residue stretch at 562–607 (QAPEVRFSKEMECLQAMGFVNYNANLQALIATDGDTNAAIYKLKSS) folds into the UBA domain.

The chain is Ubiquilin-like protein (Ubqlnl) from Mus musculus (Mouse).